The chain runs to 173 residues: MSEDTNKNENVDNIPDNFDDNVSFTKLNEDVKDELALAKESLMRATADFENIKKRLEREKGEAVKFANESFARDLLPVIDALEIASNLQSGDDEIANKIKDGINLTIEQFKKCFEKYGIKEIRTDAEFNPEFHNAINYIESDEVESGKIAAVYQKGYLYNDRVLRPSMVVIAK.

Belongs to the GrpE family. Homodimer.

The protein localises to the cytoplasm. Participates actively in the response to hyperosmotic and heat shock by preventing the aggregation of stress-denatured proteins, in association with DnaK and GrpE. It is the nucleotide exchange factor for DnaK and may function as a thermosensor. Unfolded proteins bind initially to DnaJ; upon interaction with the DnaJ-bound protein, DnaK hydrolyzes its bound ATP, resulting in the formation of a stable complex. GrpE releases ADP from DnaK; ATP binding to DnaK triggers the release of the substrate protein, thus completing the reaction cycle. Several rounds of ATP-dependent interactions between DnaJ, DnaK and GrpE are required for fully efficient folding. The sequence is that of Protein GrpE from Campylobacter fetus subsp. fetus (strain 82-40).